Here is a 256-residue protein sequence, read N- to C-terminus: Hydroxyacylglutathione hydrolase (256 aa).

Residues histidine 55, histidine 57, aspartate 59, histidine 60, histidine 113, aspartate 130, and histidine 168 each contribute to the Zn(2+) site.

Belongs to the metallo-beta-lactamase superfamily. Glyoxalase II family. In terms of assembly, monomer. The cofactor is Zn(2+).

The catalysed reaction is an S-(2-hydroxyacyl)glutathione + H2O = a 2-hydroxy carboxylate + glutathione + H(+). It participates in secondary metabolite metabolism; methylglyoxal degradation; (R)-lactate from methylglyoxal: step 2/2. Functionally, thiolesterase that catalyzes the hydrolysis of S-D-lactoyl-glutathione to form glutathione and D-lactic acid. This is Hydroxyacylglutathione hydrolase from Psychromonas ingrahamii (strain DSM 17664 / CCUG 51855 / 37).